A 196-amino-acid chain; its full sequence is Imidazoleglycerol-phosphate dehydratase (196 aa).

Belongs to the imidazoleglycerol-phosphate dehydratase family.

The protein localises to the cytoplasm. The enzyme catalyses D-erythro-1-(imidazol-4-yl)glycerol 3-phosphate = 3-(imidazol-4-yl)-2-oxopropyl phosphate + H2O. Its pathway is amino-acid biosynthesis; L-histidine biosynthesis; L-histidine from 5-phospho-alpha-D-ribose 1-diphosphate: step 6/9. The protein is Imidazoleglycerol-phosphate dehydratase of Zymomonas mobilis subsp. mobilis (strain ATCC 31821 / ZM4 / CP4).